The following is a 212-amino-acid chain: Pyrrolidone-carboxylate peptidase (212 aa).

Active-site residues include Glu-78, Cys-141, and His-165.

It belongs to the peptidase C15 family. Homotetramer.

The protein resides in the cytoplasm. The enzyme catalyses Release of an N-terminal pyroglutamyl group from a polypeptide, the second amino acid generally not being Pro.. Functionally, removes 5-oxoproline from various penultimate amino acid residues except L-proline. In Staphylococcus aureus, this protein is Pyrrolidone-carboxylate peptidase (pcp).